A 76-amino-acid chain; its full sequence is Acyl carrier protein (76 aa).

Residues 1-76 form the Carrier domain; it reads MSIEERVKKI…SAIDYVQNNQ (76 aa). O-(pantetheine 4'-phosphoryl)serine is present on S36.

The protein belongs to the acyl carrier protein (ACP) family. 4'-phosphopantetheine is transferred from CoA to a specific serine of apo-ACP by AcpS. This modification is essential for activity because fatty acids are bound in thioester linkage to the sulfhydryl of the prosthetic group.

The protein resides in the cytoplasm. The protein operates within lipid metabolism; fatty acid biosynthesis. In terms of biological role, carrier of the growing fatty acid chain in fatty acid biosynthesis. The sequence is that of Acyl carrier protein from Actinobacillus succinogenes (strain ATCC 55618 / DSM 22257 / CCUG 43843 / 130Z).